A 576-amino-acid chain; its full sequence is Alpha-1,3-arabinosyltransferase XAT3 (576 aa).

Residues 1–19 lie on the Cytoplasmic side of the membrane; the sequence is MKAGERPKLVRGVRQESRR. The helical; Signal-anchor for type II membrane protein transmembrane segment at 20–40 threads the bilayer; that stretch reads FRLLVIVVGFFLVSLTFVFVS. Residues 41–576 are Lumenal-facing; sequence KPDAILFSLN…LLEALDNLNP (536 aa). The interval 64–171 is disordered; sequence IQQKVNEPSG…KHKVTLPTVS (108 aa). Basic and acidic residues-rich tracts occupy residues 73–98, 126–138, and 147–163; these read GESRKTSTDALRGDPKVVDDEADAKP, THNKDGNGHKSHQ, and GESKGNDEEGEHAEQKH. N-linked (GlcNAc...) asparagine glycans are attached at residues N172, N375, and N443.

This sequence belongs to the glycosyltransferase 61 family.

The protein localises to the golgi apparatus membrane. It participates in glycan metabolism. Glycosyltransferase involved in the arabinosylation of xylan, the major hemicellulose (non-cellulosic component) of primary and secondary walls of angiosperms. Possesses alpha-1,3-arabinosyltransferase activity, transferring an arabinofuranose residue to the xylan backbone. The protein is Alpha-1,3-arabinosyltransferase XAT3 of Oryza sativa subsp. japonica (Rice).